A 323-amino-acid polypeptide reads, in one-letter code: Aspartate carbamoyltransferase catalytic subunit (323 aa).

Residues Arg71 and Thr72 each coordinate carbamoyl phosphate. Lys99 is a binding site for L-aspartate. Carbamoyl phosphate-binding residues include Arg121, His151, and Gln154. Positions 184 and 239 each coordinate L-aspartate. The carbamoyl phosphate site is built by Gly280 and Pro281.

This sequence belongs to the aspartate/ornithine carbamoyltransferase superfamily. ATCase family. As to quaternary structure, heterododecamer (2C3:3R2) of six catalytic PyrB chains organized as two trimers (C3), and six regulatory PyrI chains organized as three dimers (R2).

It catalyses the reaction carbamoyl phosphate + L-aspartate = N-carbamoyl-L-aspartate + phosphate + H(+). It participates in pyrimidine metabolism; UMP biosynthesis via de novo pathway; (S)-dihydroorotate from bicarbonate: step 2/3. In terms of biological role, catalyzes the condensation of carbamoyl phosphate and aspartate to form carbamoyl aspartate and inorganic phosphate, the committed step in the de novo pyrimidine nucleotide biosynthesis pathway. This Cupriavidus taiwanensis (strain DSM 17343 / BCRC 17206 / CCUG 44338 / CIP 107171 / LMG 19424 / R1) (Ralstonia taiwanensis (strain LMG 19424)) protein is Aspartate carbamoyltransferase catalytic subunit.